Reading from the N-terminus, the 604-residue chain is Elongation factor 4 (604 aa).

In terms of domain architecture, tr-type G spans 10 to 191; it reads KNIRNFSIIA…KIITTIPAPS (182 aa). GTP-binding positions include 22-27 and 138-141; these read DHGKST and NKID.

Belongs to the TRAFAC class translation factor GTPase superfamily. Classic translation factor GTPase family. LepA subfamily.

The protein localises to the cell inner membrane. The enzyme catalyses GTP + H2O = GDP + phosphate + H(+). Required for accurate and efficient protein synthesis under certain stress conditions. May act as a fidelity factor of the translation reaction, by catalyzing a one-codon backward translocation of tRNAs on improperly translocated ribosomes. Back-translocation proceeds from a post-translocation (POST) complex to a pre-translocation (PRE) complex, thus giving elongation factor G a second chance to translocate the tRNAs correctly. Binds to ribosomes in a GTP-dependent manner. The sequence is that of Elongation factor 4 from Helicobacter acinonychis (strain Sheeba).